A 431-amino-acid chain; its full sequence is Transmembrane protease serine 11C (431 aa).

At 1 to 33 the chain is on the cytoplasmic side; that stretch reads MARGQPRRSEEQWTALQNRTECKTKIKLTRCGK. A helical; Signal-anchor for type II membrane protein transmembrane segment spans residues 34-54; the sequence is ITLGILTAVLAAVLIGLIAYF. Over 55–431 the chain is Extracellular; it reads AACGKDSFYY…RDWITSKTGL (377 aa). The region spanning 60–177 is the SEA domain; it reads DSFYYHVSFK…SSFKFSDIAM (118 aa). The N-linked (GlcNAc...) asparagine glycan is linked to Asn-99. Residues 200–430 form the Peptidase S1 domain; sequence VAGGQDAEEG…YRDWITSKTG (231 aa). Cys-225 and Cys-241 are oxidised to a cystine. His-240 (charge relay system) is an active-site residue. Asn-276 carries an N-linked (GlcNAc...) asparagine glycan. The active-site Charge relay system is Asp-285. Residue Asn-347 is glycosylated (N-linked (GlcNAc...) asparagine). 2 cysteine pairs are disulfide-bonded: Cys-350–Cys-366 and Cys-377–Cys-406. The active-site Charge relay system is the Ser-381.

It belongs to the peptidase S1 family. Post-translationally, proteolytically cleaved via an autocatalytic mechanism. In terms of tissue distribution, expressed specifically in Purkinje neurons of the cerebellum (at protein level). Also detected in spinal cord.

The protein localises to the cell membrane. It localises to the cell projection. It is found in the dendrite. The protein resides in the perikaryon. Its function is as follows. Serine protease which has a preference for Arg or Lys in position P1 and uncharged residues in positions P2 and P3. Shows specificity towards FGF2 in vitro. This Mus musculus (Mouse) protein is Transmembrane protease serine 11C.